A 431-amino-acid chain; its full sequence is Glutamate-1-semialdehyde 2,1-aminomutase (431 aa).

Lys-270 carries the N6-(pyridoxal phosphate)lysine modification.

This sequence belongs to the class-III pyridoxal-phosphate-dependent aminotransferase family. HemL subfamily. In terms of assembly, homodimer. Requires pyridoxal 5'-phosphate as cofactor.

The protein localises to the cytoplasm. The catalysed reaction is (S)-4-amino-5-oxopentanoate = 5-aminolevulinate. The protein operates within porphyrin-containing compound metabolism; protoporphyrin-IX biosynthesis; 5-aminolevulinate from L-glutamyl-tRNA(Glu): step 2/2. The protein is Glutamate-1-semialdehyde 2,1-aminomutase of Limosilactobacillus reuteri subsp. reuteri (strain JCM 1112) (Lactobacillus reuteri).